Consider the following 214-residue polypeptide: Probable transaldolase (214 aa).

The active-site Schiff-base intermediate with substrate is the lysine 83.

This sequence belongs to the transaldolase family. Type 3B subfamily.

It localises to the cytoplasm. It catalyses the reaction D-sedoheptulose 7-phosphate + D-glyceraldehyde 3-phosphate = D-erythrose 4-phosphate + beta-D-fructose 6-phosphate. It functions in the pathway carbohydrate degradation; pentose phosphate pathway; D-glyceraldehyde 3-phosphate and beta-D-fructose 6-phosphate from D-ribose 5-phosphate and D-xylulose 5-phosphate (non-oxidative stage): step 2/3. Transaldolase is important for the balance of metabolites in the pentose-phosphate pathway. The chain is Probable transaldolase from Clostridium botulinum (strain Alaska E43 / Type E3).